Reading from the N-terminus, the 935-residue chain is DNA repair protein rev1 (935 aa).

The region spanning 59 to 147 (SKSDLFHGLA…KILPWINYRT (89 aa)) is the BRCT domain. Polar residues predominate over residues 162-178 (SKPSQPEGNLEDIQTSS). The interval 162–193 (SKPSQPEGNLEDIQTSSQEEEHDNEKDKTKES) is disordered. Basic and acidic residues predominate over residues 184–193 (DNEKDKTKES). Residues 235–245 (FFSSSRLHHLS) are interaction with target DNA. Residues R240 and 283–287 (DFDCF) contribute to the dCTP site. A UmuC domain is found at 279–460 (LLHVDFDCFF…LSVQDLPGVG (182 aa)). Mg(2+)-binding residues include D283 and F284. Positions 310–312 (IKN) are interaction with target DNA. Residues 317–323 (SCNYEAR), N329, and D378 each bind dCTP. The Mg(2+) site is built by D378 and E379. Interaction with target DNA stretches follow at residues 460-463 (GSSQ) and 517-525 (RRSISVDVN).

This sequence belongs to the DNA polymerase type-Y family. Requires Mg(2+) as cofactor.

It localises to the nucleus. Its subcellular location is the nucleolus. It is found in the mitochondrion. The protein localises to the cytoplasm. The protein resides in the cytoskeleton. It localises to the spindle. Deoxycytidyl transferase involved in DNA repair. Transfers a dCMP residue from dCTP to the 3'-end of a DNA primer in a template-dependent reaction. May assist in the first step in the bypass of abasic lesions by the insertion of a nucleotide opposite the lesion. Required for normal induction of mutations by physical and chemical agents. Involved in mitochondrial DNA mutagenesis. The polypeptide is DNA repair protein rev1 (Schizosaccharomyces pombe (strain 972 / ATCC 24843) (Fission yeast)).